We begin with the raw amino-acid sequence, 125 residues long: MPTINQLVRHGRQTEVTKSKSPAMQGGPQRRGVCTRVYTTTPKKPNSALRKVAKVRLTNGFEVISYIGGEGHNLQEHSVVLVRGGRVKDLPGVRYHIVRGSLDLQGVKDRKQSRSKYGAKRPKKA.

The tract at residues 1–31 (MPTINQLVRHGRQTEVTKSKSPAMQGGPQRR) is disordered. Asp-89 bears the 3-methylthioaspartic acid mark. The disordered stretch occupies residues 105–125 (QGVKDRKQSRSKYGAKRPKKA). Residues 113–125 (SRSKYGAKRPKKA) show a composition bias toward basic residues.

This sequence belongs to the universal ribosomal protein uS12 family. Part of the 30S ribosomal subunit. Contacts proteins S8 and S17. May interact with IF1 in the 30S initiation complex.

Functionally, with S4 and S5 plays an important role in translational accuracy. Its function is as follows. Interacts with and stabilizes bases of the 16S rRNA that are involved in tRNA selection in the A site and with the mRNA backbone. Located at the interface of the 30S and 50S subunits, it traverses the body of the 30S subunit contacting proteins on the other side and probably holding the rRNA structure together. The combined cluster of proteins S8, S12 and S17 appears to hold together the shoulder and platform of the 30S subunit. This is Small ribosomal subunit protein uS12 from Methylibium petroleiphilum (strain ATCC BAA-1232 / LMG 22953 / PM1).